A 329-amino-acid polypeptide reads, in one-letter code: Aurora kinase B (329 aa).

The span at 1–14 (MTLSRAKHANRNHL) shows a compositional bias: basic residues. The interval 1-21 (MTLSRAKHANRNHLPHLLAKV) is disordered. One can recognise a Protein kinase domain in the interval 53-305 (FEMGAHLGRG…LVDVMTHYWV (253 aa)). ATP is bound by residues 59–67 (LGRGKFGRV) and Lys-82. The active-site Proton acceptor is Asp-178.

Belongs to the protein kinase superfamily. Ser/Thr protein kinase family. Aurora subfamily. Interacts with Incenp and Cdc37. It depends on Mg(2+) as a cofactor.

It localises to the chromosome. Its subcellular location is the cytoplasm. It is found in the cytoskeleton. The protein localises to the midbody. The catalysed reaction is L-seryl-[protein] + ATP = O-phospho-L-seryl-[protein] + ADP + H(+). The enzyme catalyses L-threonyl-[protein] + ATP = O-phospho-L-threonyl-[protein] + ADP + H(+). Serine/threonine-protein kinase that mediates both meiotic and mitotic chromosome segregation. Required for histone H3 'Ser-10' phosphorylation. Phosphorylates mei-S332 within residues 124-126 and stabilizes its association with centromeres during meiosis. May regulate the function of the ESCRT-III complex core component shrb during abscission of germline cells in oogenesis. The chain is Aurora kinase B from Drosophila melanogaster (Fruit fly).